The sequence spans 225 residues: Orotate phosphoribosyltransferase (225 aa).

K31 contributes to the 5-phospho-alpha-D-ribose 1-diphosphate binding site. 39–40 (FF) contributes to the orotate binding site. 5-phospho-alpha-D-ribose 1-diphosphate-binding positions include 78–79 (YK), R105, K106, K109, H111, and 130–138 (DDVLTSGKA). Orotate is bound by residues T134 and R163.

The protein belongs to the purine/pyrimidine phosphoribosyltransferase family. PyrE subfamily. Homodimer.

It catalyses the reaction orotidine 5'-phosphate + diphosphate = orotate + 5-phospho-alpha-D-ribose 1-diphosphate. Its pathway is pyrimidine metabolism; UMP biosynthesis via de novo pathway; UMP from orotate: step 1/2. In terms of biological role, catalyzes the transfer of a ribosyl phosphate group from 5-phosphoribose 1-diphosphate to orotate, leading to the formation of orotidine monophosphate (OMP). This chain is Orotate phosphoribosyltransferase (URA5), found in Cryptococcus neoformans var. grubii serotype A (strain H99 / ATCC 208821 / CBS 10515 / FGSC 9487) (Filobasidiella neoformans var. grubii).